The following is a 375-amino-acid chain: Putative prophage phiRv2 integrase (375 aa).

Positions 75 to 153 (APFGEYAEGW…LLRAIMQTAL (79 aa)) constitute a Core-binding (CB) domain. One can recognise a Tyr recombinase domain in the interval 175 to 364 (HKIRPATLDE…AKGRDREIAA (190 aa)). Residues arginine 209, histidine 316, arginine 319, and histidine 342 contribute to the active site. Catalysis depends on tyrosine 351, which acts as the O-(3'-phospho-DNA)-tyrosine intermediate.

Belongs to the 'phage' integrase family.

Functionally, integrase is necessary for integration of the phage into the host genome by site-specific recombination. In conjunction with excisionase, integrase is also necessary for excision of the prophage from the host genome. The polypeptide is Putative prophage phiRv2 integrase (Mycobacterium tuberculosis (strain CDC 1551 / Oshkosh)).